Here is a 300-residue protein sequence, read N- to C-terminus: 3-hydroxy-3-isohexenylglutaryl-CoA/hydroxy-methylglutaryl-CoA lyase (300 aa).

One can recognise a Pyruvate carboxyltransferase domain in the interval 7–274 (VRLVEVGPRD…HTGVDMHALV (268 aa)). R15 contacts substrate. A divalent metal cation-binding residues include D16, H207, and H209. C240 is an active-site residue. Residue N249 coordinates a divalent metal cation.

It belongs to the HMG-CoA lyase family. Homodimer. It depends on Mg(2+) as a cofactor. The cofactor is Mn(2+).

It carries out the reaction 3-hydroxy-3-(4-methylpent-3-en-1-yl)glutaryl-CoA = 7-methyl-3-oxooct-6-enoyl-CoA + acetate. The catalysed reaction is (3S)-3-hydroxy-3-methylglutaryl-CoA = acetoacetate + acetyl-CoA. Its pathway is metabolic intermediate metabolism; (S)-3-hydroxy-3-methylglutaryl-CoA degradation; acetoacetate from (S)-3-hydroxy-3-methylglutaryl-CoA: step 1/1. Functionally, involved in the L-leucine, isovalerate and acyclic monoterpene catabolism. Catalyzes the cleavage of 3-hydroxy-3-methylglutaryl-CoA (HMG-CoA) to yield acetyl-CoA and acetoacetate. It can also catalyze the cleavage of 3-hydroxy-3-isohexenylglutaryl-CoA (HIHG_CoA) to yield 7-methyl-3-oxooct-6-enoyl-CoA and acetate. In Pseudomonas aeruginosa (strain ATCC 15692 / DSM 22644 / CIP 104116 / JCM 14847 / LMG 12228 / 1C / PRS 101 / PAO1), this protein is 3-hydroxy-3-isohexenylglutaryl-CoA/hydroxy-methylglutaryl-CoA lyase.